Reading from the N-terminus, the 155-residue chain is Putative pre-16S rRNA nuclease (155 aa).

Belongs to the YqgF nuclease family.

It is found in the cytoplasm. In terms of biological role, could be a nuclease involved in processing of the 5'-end of pre-16S rRNA. This chain is Putative pre-16S rRNA nuclease, found in Xanthomonas campestris pv. campestris (strain 8004).